Consider the following 321-residue polypeptide: Glutaminase (321 aa).

Substrate is bound by residues Ser69, Asn120, Glu165, Asn172, Tyr196, Tyr248, and Val266.

This sequence belongs to the glutaminase family. In terms of assembly, homotetramer.

It catalyses the reaction L-glutamine + H2O = L-glutamate + NH4(+). The chain is Glutaminase from Bacteroides fragilis (strain YCH46).